The following is a 39-amino-acid chain: Phosphatase RapI inhibitor (39 aa).

The propeptide occupies 1–34 (MKISRILLAAVILSSVFSITYLQSDHNTEIKVAA).

It belongs to the Phr family. Post-translationally, contains a predicted signal peptide cleavage site in the N-terminal region, however the propeptide is probably subject to only one processing event, at the N-terminal end of the mature peptide.

It is found in the secreted. The protein localises to the cytoplasm. Functionally, intercellular signaling molecule that inhibits excision of the mobile genetic element ICEBs1 when cells are crowded by cells that contain ICEBs1 and produce the PhrI peptide. Secreted during production, but the mature peptide acts intracellularly, indicating that it needs to be imported into the cell to function. Acts by inhibiting RapI activity. The protein is Phosphatase RapI inhibitor (phrI) of Bacillus subtilis (strain 168).